The following is a 463-amino-acid chain: Exodeoxyribonuclease 7 large subunit (463 aa).

The protein belongs to the XseA family. Heterooligomer composed of large and small subunits.

It localises to the cytoplasm. It carries out the reaction Exonucleolytic cleavage in either 5'- to 3'- or 3'- to 5'-direction to yield nucleoside 5'-phosphates.. Bidirectionally degrades single-stranded DNA into large acid-insoluble oligonucleotides, which are then degraded further into small acid-soluble oligonucleotides. This is Exodeoxyribonuclease 7 large subunit from Pseudomonas syringae pv. syringae (strain B728a).